A 1040-amino-acid polypeptide reads, in one-letter code: Multidrug resistance protein MdtB (1040 aa).

A run of 12 helical transmembrane segments spans residues 25-45 (LLMAAILLAGIIGYRFLPVAA), 347-367 (LMLAIALVVMIIYLFLRNIPA), 369-389 (IIPGVAVPLSLIGTFAVMVFL), 396-416 (LTLMALTIATGFVVDDAIVVI), 440-460 (IGFTIISLTFSLIAVLIPLLF), 472-492 (FAVTLAVAILISAVVSLTLTP), 537-557 (WLTLSVAFATLLLSVMLWIVI), 863-883 (LGSTVWLIVAAVVAMYIVLGV), 888-908 (FIHPITILSTLPTAGVGALLA), 910-930 (IIAGSELDIIAIIGIILLIGI), 968-988 (ILMTTLAALLGALPLMLSTGV), and 998-1018 (IAMVGGLLVSQVLTLFTTPVI).

Belongs to the resistance-nodulation-cell division (RND) (TC 2.A.6) family. MdtB subfamily. Part of a tripartite efflux system composed of MdtA, MdtB and MdtC. MdtB forms a heteromultimer with MdtC.

Its subcellular location is the cell inner membrane. In Salmonella agona (strain SL483), this protein is Multidrug resistance protein MdtB.